Consider the following 77-residue polypeptide: U8-lycotoxin-Ls1e (77 aa).

Positions M1–A20 are cleaved as a signal peptide. A propeptide spanning residues Q21–K26 is cleaved from the precursor.

It belongs to the neurotoxin 19 (CSTX) family. 08 (U8-Lctx) subfamily. Contains 4 disulfide bonds. As to expression, expressed by the venom gland.

It is found in the secreted. This chain is U8-lycotoxin-Ls1e, found in Lycosa singoriensis (Wolf spider).